A 248-amino-acid chain; its full sequence is 2-C-methyl-D-erythritol 4-phosphate cytidylyltransferase (248 aa).

Belongs to the IspD/TarI cytidylyltransferase family. IspD subfamily.

It catalyses the reaction 2-C-methyl-D-erythritol 4-phosphate + CTP + H(+) = 4-CDP-2-C-methyl-D-erythritol + diphosphate. The protein operates within isoprenoid biosynthesis; isopentenyl diphosphate biosynthesis via DXP pathway; isopentenyl diphosphate from 1-deoxy-D-xylulose 5-phosphate: step 2/6. Its function is as follows. Catalyzes the formation of 4-diphosphocytidyl-2-C-methyl-D-erythritol from CTP and 2-C-methyl-D-erythritol 4-phosphate (MEP). This Corynebacterium efficiens (strain DSM 44549 / YS-314 / AJ 12310 / JCM 11189 / NBRC 100395) protein is 2-C-methyl-D-erythritol 4-phosphate cytidylyltransferase.